The chain runs to 358 residues: Isopentenyl-diphosphate delta-isomerase (358 aa).

Residue 12-13 (RK) coordinates substrate. Residues 69 to 71 (AMT), S99, and N128 each bind FMN. Q158 provides a ligand contact to substrate. E159 contributes to the Mg(2+) binding site. FMN contacts are provided by residues K190, T220, 267-269 (GIR), and 288-289 (AG).

This sequence belongs to the IPP isomerase type 2 family. As to quaternary structure, homooctamer. Dimer of tetramers. Requires FMN as cofactor. It depends on NADPH as a cofactor. The cofactor is Mg(2+).

The protein resides in the cytoplasm. It catalyses the reaction isopentenyl diphosphate = dimethylallyl diphosphate. Involved in the biosynthesis of isoprenoids. Catalyzes the 1,3-allylic rearrangement of the homoallylic substrate isopentenyl (IPP) to its allylic isomer, dimethylallyl diphosphate (DMAPP). The protein is Isopentenyl-diphosphate delta-isomerase of Listeria monocytogenes serotype 4b (strain CLIP80459).